A 784-amino-acid chain; its full sequence is Toll-like receptor 2 (784 aa).

The N-terminal stretch at 1–20 (MPRALWPAWVWAIIILSMEG) is a signal peptide. The Extracellular portion of the chain corresponds to 21 to 587 (ASDKASSLSC…ARLSLSECHR (567 aa)). Cysteines 30 and 36 form a disulfide. LRR repeat units lie at residues 54-77 (VKSLDLSNNEITYVGNRDLQRCVN), 78-101 (LKTLRLGANEIHTVEEDSFFHLRN), 102-125 (LEYLDLSYNRLSNLSSSWFRSLYV), 126-150 (LKFLNLLGNLYKTLGETSLFSHLPD), 151-175 (LRTLKVGNSNSFTEIHEKDFTGLTF), 176-199 (LEELEISAQNLQIYVPKSLKSIQN), 200-223 (ISHLILHLKQPVLLVDILVDIVSS), 224-250 (LDCLELRDTNLHTFHFSEASISEMSTS), 251-278 (VKKLIFRNVQFTDESFVEVVKLFNYVSG), 279-308 (IVEVEFDDCTHDGIGDFRALSLDRIRHLGN), 309-337 (VETLTIRKLHIPQFFLFQDLSSIYPLTGK), 338-361 (VKRVTIENSKVFLVPCLLSQHLKS), 362-388 (LEYLDLSENLMSEETLKNSACKDAWPF), 389-414 (LQTLVLRQNRLKSLEKTGELLLTLKN), 415-437 (LNNLDISKNNFLSMPETCQWPGK), 438-457 (MKQLNLSSTKIRSLTQCLPQ), 458-478 (TLEILDVSNNNLDSFSLILPQ), 479-500 (LKELYISRNKLKTLPDASFLPV), and 501-524 (LSVMGISKNIINTFSKEQLDSFQQ). N-linked (GlcNAc...) asparagine glycosylation occurs at Asn114. An N-linked (GlcNAc...) asparagine glycan is attached at Asn199. Cys353 and Cys382 are joined by a disulfide. The cysteines at positions 432 and 454 are disulfide-linked. Residue Asn442 is glycosylated (N-linked (GlcNAc...) asparagine). Residues 525–579 (LKTLEAGGNNFICSCDFLSFTQGQQALGRVLVDWPDDYRCDSPSHVRGQRLQDAR) form the LRRCT domain. The helical transmembrane segment at 588–608 (AAVVSAACCALFLFLLLTGVL) threads the bilayer. The Cytoplasmic segment spans residues 609-784 (CHRFHGLWYM…WLNLRAAIRS (176 aa)). Residues 639-782 (ICYDAFVSYS…GFWLNLRAAI (144 aa)) enclose the TIR domain. Lys754 is covalently cross-linked (Glycyl lysine isopeptide (Lys-Gly) (interchain with G-Cter in ubiquitin)). The ATG16L1-binding motif motif lies at 761–778 (YLEWPLDETQQEGFWLNL).

It belongs to the Toll-like receptor family. As to quaternary structure, interacts with LY96, TLR1 and TLR6 (via extracellular domain). TLR2 seems to exist in heterodimers with either TLR1 or TLR6 before stimulation by the ligand. The heterodimers form bigger oligomers in response to their corresponding ligands as well as further heterotypic associations with other receptors such as CD14 and/or CD36. Binds MYD88 (via TIR domain). Interacts with TICAM1. Interacts with CNPY3. Interacts with ATG16L1. Interacts with PPP1R11. Interacts with TICAM2. Interacts with TIRAP. Post-translationally, ubiquitinated at Lys-754 by PPP1R11, leading to its degradation. Deubiquitinated by USP2. Glycosylation of Asn-442 is critical for secretion of the N-terminal ectodomain of TLR2.

It localises to the membrane. The protein localises to the cytoplasmic vesicle. It is found in the phagosome membrane. The protein resides in the membrane raft. In terms of biological role, cooperates with LY96 to mediate the innate immune response to bacterial lipoproteins and other microbial cell wall components. Cooperates with TLR1 or TLR6 to mediate the innate immune response to bacterial lipoproteins or lipopeptides. Acts via MYD88 and TRAF6, leading to NF-kappa-B activation, cytokine secretion and the inflammatory response. May also promote apoptosis in response to lipoproteins. Forms activation clusters composed of several receptors depending on the ligand, these clusters trigger signaling from the cell surface and subsequently are targeted to the Golgi in a lipid-raft dependent pathway. Forms the cluster TLR2:TLR6:CD14:CD36 in response to diacylated lipopeptides and TLR2:TLR1:CD14 in response to triacylated lipopeptides. In Boselaphus tragocamelus (Nilgai), this protein is Toll-like receptor 2 (TLR2).